Here is a 462-residue protein sequence, read N- to C-terminus: Protein ultraspiracle homolog (462 aa).

The modulating stretch occupies residues 1–113; the sequence is MSSVAKKDKR…NHPLSGSKHL (113 aa). NR C4-type zinc fingers lie at residues 114–134 and 150–174; these read CSIC…CEGC and CRED…YQKC. Positions 114–179 form a DNA-binding region, nuclear receptor; it reads CSICGDRASG…RYQKCLACGM (66 aa). Positions 180–201 are hinge; sequence KREAVQEERQRAARRTEDAHPS. The 250-residue stretch at 204–453 folds into the NR LBD domain; the sequence is VQELSIERLL…SYIRDALCNH (250 aa).

Belongs to the nuclear hormone receptor family. NR2 subfamily. Heterodimer of USP and ECR. In terms of tissue distribution, abundant expression seen in males and ovaries.

It localises to the nucleus. The sequence is that of Protein ultraspiracle homolog (USP) from Bombyx mori (Silk moth).